The following is a 617-amino-acid chain: KIF-binding protein (617 aa).

Residues 48-83 form a disordered region; sequence ALLGPAPEDEDEPAADDGPGDQALGAGEPREAEGPG. Acidic residues predominate over residues 54–66; the sequence is PEDEDEPAADDGP. Residue S174 is modified to Phosphoserine.

This sequence belongs to the KIF-binding protein family. In terms of assembly, interacts with KIF1B; positively regulates KIF1B microtubule motor activity. Interacts with STMN2. In the embryo it is expressed in cortical neurons; expression increases during neuronal development.

It localises to the cytoplasm. Its subcellular location is the cytoskeleton. In terms of biological role, activator of KIF1B plus-end-directed microtubule motor activity. Required for organization of axonal microtubules, and axonal outgrowth and maintenance during peripheral and central nervous system development. The protein is KIF-binding protein of Mus musculus (Mouse).